The primary structure comprises 383 residues: uncharacterized protein (383 aa).

The protein to V.anguillarum virulence protein VirA.

Functionally, could have an enzymatic function. This is an uncharacterized protein from Sinorhizobium fredii (strain NBRC 101917 / NGR234).